The primary structure comprises 447 residues: Putative branched-chain amino acid carrier protein SERP0977 (447 aa).

12 helical membrane-spanning segments follow: residues threonine 5–proline 25, isoleucine 40–leucine 60, proline 74–isoleucine 94, glycine 114–leucine 134, isoleucine 143–phenylalanine 163, glycine 193–isoleucine 213, isoleucine 229–isoleucine 249, leucine 290–valine 310, isoleucine 317–leucine 337, valine 350–alanine 370, isoleucine 382–isoleucine 402, and leucine 417–valine 437.

Belongs to the branched chain amino acid transporter family.

It is found in the cell membrane. Component of the transport system for branched-chain amino acids (leucine, isoleucine and valine), which is coupled to a proton motive force. This Staphylococcus epidermidis (strain ATCC 35984 / DSM 28319 / BCRC 17069 / CCUG 31568 / BM 3577 / RP62A) protein is Putative branched-chain amino acid carrier protein SERP0977.